We begin with the raw amino-acid sequence, 859 residues long: Low-density lipoprotein receptor-related protein 12 (859 aa).

A signal peptide spans 1–32; that stretch reads MACRWSTKESPRWRSALLLLFLAGVYGNGALA. Over 33–492 the chain is Extracellular; sequence EHSENVHISG…ENCPVIVPTR (460 aa). 2 disulfide bridges follow: C47–C76 and C103–C122. In terms of domain architecture, CUB 1 spans 47 to 159; that stretch reads CGETPEQIRA…KGFRLAYFSG (113 aa). N75 carries N-linked (GlcNAc...) asparagine glycosylation. N-linked (GlcNAc...) asparagine glycosylation is present at N146. LDL-receptor class A domains are found at residues 165 to 201 and 214 to 255; these read NCAC…EICA and PCAY…IDCD. Intrachain disulfides connect C166-C178, C173-C191, C185-C200, C215-C232, C222-C245, C239-C254, and C259-C285. Residues 259–372 enclose the CUB 2 domain; it reads CGQWLKYFYG…RGFNATYQVD (114 aa). N-linked (GlcNAc...) asparagine glycans are attached at residues N284 and N366. 3 consecutive LDL-receptor class A domains span residues 374-411, 412-449, and 450-486; these read FCLP…TNCT, MCQK…KNCF, and FCQP…ENCP. Intrachain disulfides connect C375–C388, C382–C401, C395–C410, C413–C426, C420–C439, C433–C448, C451–C463, C458–C476, and C470–C485. N409 carries an N-linked (GlcNAc...) asparagine glycan. Residue N441 is glycosylated (N-linked (GlcNAc...) asparagine). Residues 493-513 form a helical membrane-spanning segment; that stretch reads VITAAVIGSLICGLLLVIALG. Over 514–859 the chain is Cytoplasmic; it reads CTCKLYSLRM…TSDDEALLLC (346 aa). Disordered regions lie at residues 623-678, 693-723, 748-770, and 801-823; these read ADGD…LPQK, ASSS…SPAR, SSLS…REDD, and DQGQ…SNRD. 2 stretches are compositionally biased toward polar residues: residues 748-757 and 801-814; these read SSLSQNQSPL and DQGQ…NATN.

Belongs to the LDLR family. As to quaternary structure, may interact with RACK1, ZFYVE9 and NMRK2. As to expression, widely expressed in heart, skeletal muscle, brain, lung, placenta and pancreas, but not in tissues consisting of a large number of epithelial cells, such as liver and kidney. Expressed at very low levels in a number of tumor-derived cell lines.

The protein resides in the membrane. The protein localises to the coated pit. Its function is as follows. Probable receptor, which may be involved in the internalization of lipophilic molecules and/or signal transduction. May act as a tumor suppressor. In Homo sapiens (Human), this protein is Low-density lipoprotein receptor-related protein 12 (LRP12).